Reading from the N-terminus, the 255-residue chain is Indole-3-glycerol phosphate synthase (255 aa).

It belongs to the TrpC family.

It catalyses the reaction 1-(2-carboxyphenylamino)-1-deoxy-D-ribulose 5-phosphate + H(+) = (1S,2R)-1-C-(indol-3-yl)glycerol 3-phosphate + CO2 + H2O. The protein operates within amino-acid biosynthesis; L-tryptophan biosynthesis; L-tryptophan from chorismate: step 4/5. The chain is Indole-3-glycerol phosphate synthase from Streptococcus pneumoniae serotype 19F (strain G54).